We begin with the raw amino-acid sequence, 474 residues long: tRNA-2-methylthio-N(6)-dimethylallyladenosine synthase (474 aa).

An MTTase N-terminal domain is found at 3-120; sequence KKLHIKTWGC…LPEMIEQVRR (118 aa). The [4Fe-4S] cluster site is built by C12, C49, C83, C157, C161, and C164. The Radical SAM core domain maps to 143–375; sequence RAEGPTAFVS…QDRITQQAMR (233 aa). The 64-residue stretch at 378–441 folds into the TRAM domain; it reads RHMMGTVQRI…TNSLRGVFIR (64 aa).

Belongs to the methylthiotransferase family. MiaB subfamily. Monomer. Requires [4Fe-4S] cluster as cofactor.

Its subcellular location is the cytoplasm. It catalyses the reaction N(6)-dimethylallyladenosine(37) in tRNA + (sulfur carrier)-SH + AH2 + 2 S-adenosyl-L-methionine = 2-methylsulfanyl-N(6)-dimethylallyladenosine(37) in tRNA + (sulfur carrier)-H + 5'-deoxyadenosine + L-methionine + A + S-adenosyl-L-homocysteine + 2 H(+). Its function is as follows. Catalyzes the methylthiolation of N6-(dimethylallyl)adenosine (i(6)A), leading to the formation of 2-methylthio-N6-(dimethylallyl)adenosine (ms(2)i(6)A) at position 37 in tRNAs that read codons beginning with uridine. This is tRNA-2-methylthio-N(6)-dimethylallyladenosine synthase from Shewanella baltica (strain OS185).